Consider the following 139-residue polypeptide: Small ribosomal subunit protein bS6 (139 aa).

A disordered region spans residues 118-139 (SFKGGSKIETPTGSESTDIQEK). Polar residues predominate over residues 126–139 (ETPTGSESTDIQEK).

The protein belongs to the bacterial ribosomal protein bS6 family.

Functionally, binds together with bS18 to 16S ribosomal RNA. This Borrelia garinii subsp. bavariensis (strain ATCC BAA-2496 / DSM 23469 / PBi) (Borreliella bavariensis) protein is Small ribosomal subunit protein bS6.